We begin with the raw amino-acid sequence, 121 residues long: UPF0344 protein BCG9842_B4136 (121 aa).

The next 4 helical transmembrane spans lie at 6-26, 38-58, 65-85, and 92-112; these read ITAWALGLILFFVAYSLYSAG, LMYIIIIVTGFMLYMSIVKTA, WYGLKMLTGILVIGGMEMVLV, and PTGAVWGLFIVALVAVFYLGL.

It belongs to the UPF0344 family.

The protein resides in the cell membrane. The protein is UPF0344 protein BCG9842_B4136 of Bacillus cereus (strain G9842).